The following is a 50-amino-acid chain: Fungus-induced-related protein 15 (50 aa).

An N-terminal signal peptide occupies residues 1–21 (MNFYSLFVFIALIFSFNVVHG).

In terms of biological role, may have role in hypoxia response. This chain is Fungus-induced-related protein 15 (fipr-15), found in Caenorhabditis elegans.